A 207-amino-acid chain; its full sequence is Large ribosomal subunit protein uL4 (207 aa).

Residues 54–74 (RSDVRGGGKKPYRQKGTGNAR) are disordered.

Belongs to the universal ribosomal protein uL4 family. Part of the 50S ribosomal subunit.

In terms of biological role, one of the primary rRNA binding proteins, this protein initially binds near the 5'-end of the 23S rRNA. It is important during the early stages of 50S assembly. It makes multiple contacts with different domains of the 23S rRNA in the assembled 50S subunit and ribosome. Forms part of the polypeptide exit tunnel. The polypeptide is Large ribosomal subunit protein uL4 (Magnetococcus marinus (strain ATCC BAA-1437 / JCM 17883 / MC-1)).